Reading from the N-terminus, the 1108-residue chain is Folliculin-interacting protein 2 (1108 aa).

The uDENN FNIP1/2-type domain maps to 38–456; sequence FGLSDIRLLV…TVMPVDHPPI (419 aa). Disordered stretches follow at residues 89-112, 209-233, 598-635, and 649-671; these read QESS…GGSL, RTGS…DRDS, SEGV…AEPD, and QNDQ…PRVR. Over residues 91–106 the composition is skewed to low complexity; that stretch reads SSSSSGSSSSGSSSSH. Phosphoserine occurs at positions 212 and 217. Residues 464 to 1034 enclose the cDENN FNIP1/2-type domain; it reads TSQSVNMLAK…VSSLLQSILQ (571 aa). Residues 540-905 form an interaction with PRKAA1 region; the sequence is DDQVINGSKI…DEACVLALLE (366 aa). A compositionally biased stretch (basic and acidic residues) spans 606–620; that stretch reads LGHKPEKNRCKRPEQ. Over residues 652–663 the composition is skewed to polar residues; that stretch reads QEATQDCSSSPP. Phosphoserine occurs at positions 720, 721, and 723. One can recognise a dDENN FNIP1/2-type domain in the interval 1044–1099; sequence FCIMHLEDRLQEMYLKSKMLSEYLRGHTRVHVKELSVVLGIESNDLPLLTAIASTH.

It belongs to the FNIP family. In terms of assembly, homodimer and homomultimer. Heterodimer and heteromultimer with FNIP1. Interacts (via C-terminus) with FLCN (via C-terminus). Phosphorylated FLCN is preferentially bound. Component of the lysosomal folliculin complex (LFC), composed of FLCN, FNIP1 (or FNIP2), RagA/RRAGA or RagB/RRAGB GDP-bound, RagC/RRAGC or RagD/RRAGD GTP-bound, and Ragulator. Interacts with PRKAA1, PRKAB1 and PRKAG1 subunits of 5'-AMP-activated protein kinase. Interacts with HSP70, HSP90AA1, STIP1, PTGES3, CDC37, BRAF, GCR and CDK4. In terms of processing, phosphorylated by AMPK.

The protein resides in the lysosome membrane. It is found in the cytoplasm. Its function is as follows. Binding partner of the GTPase-activating protein FLCN: involved in the cellular response to amino acid availability by regulating the non-canonical mTORC1 signaling cascade controlling the MiT/TFE factors TFEB and TFE3. Required to promote FLCN recruitment to lysosomes and interaction with Rag GTPases, leading to activation of the non-canonical mTORC1 signaling. In low-amino acid conditions, component of the lysosomal folliculin complex (LFC) on the membrane of lysosomes, which inhibits the GTPase-activating activity of FLCN, thereby inactivating mTORC1 and promoting nuclear translocation of TFEB and TFE3. Upon amino acid restimulation, disassembly of the LFC complex liberates the GTPase-activating activity of FLCN, leading to activation of mTORC1 and subsequent inactivation of TFEB and TFE3. Together with FLCN, regulates autophagy: following phosphorylation by ULK1, interacts with GABARAP and promotes autophagy. In addition to its role in mTORC1 signaling, also acts as a co-chaperone of HSP90AA1/Hsp90: inhibits the ATPase activity of HSP90AA1/Hsp90, leading to activate both kinase and non-kinase client proteins of HSP90AA1/Hsp90. Acts as a scaffold to load client protein FLCN onto HSP90AA1/Hsp90. Competes with the activating co-chaperone AHSA1 for binding to HSP90AA1, thereby providing a reciprocal regulatory mechanism for chaperoning of client proteins. May play a role in the signal transduction pathway of apoptosis induced by O6-methylguanine-mispaired lesions. The polypeptide is Folliculin-interacting protein 2 (Mus musculus (Mouse)).